We begin with the raw amino-acid sequence, 209 residues long: Thymidylate kinase (209 aa).

10–17 contributes to the ATP binding site; that stretch reads GPEGAGKT.

It belongs to the thymidylate kinase family.

It carries out the reaction dTMP + ATP = dTDP + ADP. Functionally, phosphorylation of dTMP to form dTDP in both de novo and salvage pathways of dTTP synthesis. The sequence is that of Thymidylate kinase from Anoxybacillus flavithermus (strain DSM 21510 / WK1).